The sequence spans 217 residues: Protein-L-isoaspartate O-methyltransferase (217 aa).

Ser64 is a catalytic residue.

This sequence belongs to the methyltransferase superfamily. L-isoaspartyl/D-aspartyl protein methyltransferase family.

It is found in the cytoplasm. The catalysed reaction is [protein]-L-isoaspartate + S-adenosyl-L-methionine = [protein]-L-isoaspartate alpha-methyl ester + S-adenosyl-L-homocysteine. In terms of biological role, catalyzes the methyl esterification of L-isoaspartyl residues in peptides and proteins that result from spontaneous decomposition of normal L-aspartyl and L-asparaginyl residues. It plays a role in the repair and/or degradation of damaged proteins. This chain is Protein-L-isoaspartate O-methyltransferase, found in Nitrobacter winogradskyi (strain ATCC 25391 / DSM 10237 / CIP 104748 / NCIMB 11846 / Nb-255).